Here is a 149-residue protein sequence, read N- to C-terminus: Deoxyuridine 5'-triphosphate nucleotidohydrolase (149 aa).

Substrate-binding positions include 68–70 (RSG), N81, 85–87 (LID), and M95.

This sequence belongs to the dUTPase family. Mg(2+) is required as a cofactor.

The enzyme catalyses dUTP + H2O = dUMP + diphosphate + H(+). The protein operates within pyrimidine metabolism; dUMP biosynthesis; dUMP from dCTP (dUTP route): step 2/2. Its function is as follows. This enzyme is involved in nucleotide metabolism: it produces dUMP, the immediate precursor of thymidine nucleotides and it decreases the intracellular concentration of dUTP so that uracil cannot be incorporated into DNA. This Bordetella bronchiseptica (strain ATCC BAA-588 / NCTC 13252 / RB50) (Alcaligenes bronchisepticus) protein is Deoxyuridine 5'-triphosphate nucleotidohydrolase.